Here is a 480-residue protein sequence, read N- to C-terminus: Glycogen synthase (480 aa).

Lys15 contacts ADP-alpha-D-glucose.

This sequence belongs to the glycosyltransferase 1 family. Bacterial/plant glycogen synthase subfamily.

The catalysed reaction is [(1-&gt;4)-alpha-D-glucosyl](n) + ADP-alpha-D-glucose = [(1-&gt;4)-alpha-D-glucosyl](n+1) + ADP + H(+). It participates in glycan biosynthesis; glycogen biosynthesis. In terms of biological role, synthesizes alpha-1,4-glucan chains using ADP-glucose. The chain is Glycogen synthase from Granulibacter bethesdensis (strain ATCC BAA-1260 / CGDNIH1).